The following is a 167-amino-acid chain: Phosphopantetheine adenylyltransferase (167 aa).

Ser9 lines the substrate pocket. ATP is bound by residues 9-10 (SF) and His17. Residues Lys41, Val78, and Arg92 each coordinate substrate. Residues 93–95 (GLR), Glu103, and 128–134 (SRPITAT) each bind ATP.

It belongs to the bacterial CoaD family. In terms of assembly, homohexamer. Requires Mg(2+) as cofactor.

It localises to the cytoplasm. The enzyme catalyses (R)-4'-phosphopantetheine + ATP + H(+) = 3'-dephospho-CoA + diphosphate. The protein operates within cofactor biosynthesis; coenzyme A biosynthesis; CoA from (R)-pantothenate: step 4/5. In terms of biological role, reversibly transfers an adenylyl group from ATP to 4'-phosphopantetheine, yielding dephospho-CoA (dPCoA) and pyrophosphate. This is Phosphopantetheine adenylyltransferase from Rhizobium rhizogenes (strain K84 / ATCC BAA-868) (Agrobacterium radiobacter).